The sequence spans 274 residues: Dermonecrotic toxin SdSicTox-betaIIB1ai (274 aa).

Residue histidine 5 is part of the active site. Positions 25 and 27 each coordinate Mg(2+). Histidine 41 acts as the Nucleophile in catalysis. 2 cysteine pairs are disulfide-bonded: cysteine 45–cysteine 51 and cysteine 47–cysteine 190. Residue aspartate 85 coordinates Mg(2+).

The protein belongs to the arthropod phospholipase D family. Class II subfamily. It depends on Mg(2+) as a cofactor. As to expression, expressed by the venom gland.

The protein resides in the secreted. The catalysed reaction is an N-(acyl)-sphingosylphosphocholine = an N-(acyl)-sphingosyl-1,3-cyclic phosphate + choline. It catalyses the reaction an N-(acyl)-sphingosylphosphoethanolamine = an N-(acyl)-sphingosyl-1,3-cyclic phosphate + ethanolamine. The enzyme catalyses a 1-acyl-sn-glycero-3-phosphocholine = a 1-acyl-sn-glycero-2,3-cyclic phosphate + choline. It carries out the reaction a 1-acyl-sn-glycero-3-phosphoethanolamine = a 1-acyl-sn-glycero-2,3-cyclic phosphate + ethanolamine. Functionally, dermonecrotic toxins cleave the phosphodiester linkage between the phosphate and headgroup of certain phospholipids (sphingolipid and lysolipid substrates), forming an alcohol (often choline) and a cyclic phosphate. This toxin acts on sphingomyelin (SM). It may also act on ceramide phosphoethanolamine (CPE), lysophosphatidylcholine (LPC) and lysophosphatidylethanolamine (LPE), but not on lysophosphatidylserine (LPS), and lysophosphatidylglycerol (LPG). It acts by transphosphatidylation, releasing exclusively cyclic phosphate products as second products. Induces dermonecrosis, hemolysis, increased vascular permeability, edema, inflammatory response, and platelet aggregation. This Sicarius cf. damarensis (strain GJB-2008) (Six-eyed sand spider) protein is Dermonecrotic toxin SdSicTox-betaIIB1ai.